We begin with the raw amino-acid sequence, 311 residues long: tRNA pseudouridine synthase B (311 aa).

The active-site Nucleophile is D52.

This sequence belongs to the pseudouridine synthase TruB family. Type 1 subfamily.

The enzyme catalyses uridine(55) in tRNA = pseudouridine(55) in tRNA. Its function is as follows. Responsible for synthesis of pseudouridine from uracil-55 in the psi GC loop of transfer RNAs. The polypeptide is tRNA pseudouridine synthase B (Burkholderia mallei (strain ATCC 23344)).